The sequence spans 68 residues: Large ribosomal subunit protein uL29 (68 aa).

Belongs to the universal ribosomal protein uL29 family.

The polypeptide is Large ribosomal subunit protein uL29 (Streptococcus gordonii (strain Challis / ATCC 35105 / BCRC 15272 / CH1 / DL1 / V288)).